A 275-amino-acid polypeptide reads, in one-letter code: MPELPEVETTRRGIDAVITGKTLRRLLVRESRMRWPIPADLPGLLSGRAVLECARRGKYLLLRFEHGTQIVHLGMSGSLRSVPAGEAPRKHDHVDWIFDHATLRLHDPRRFGAVLWHPDTAGPIAAHPLLARLGIEPFDPRFDGAWLHSQFRNRAIAVKQALLAGDAVVGVGNIYASESLFRAGIDPRTPARRISRARCARLADMVRATLADALASGGSTLRDYVGASGQPGSYFEIHAAVYERAGLPCRVCGTPIRRLVQGQRATYYCPSCQKR.

Proline 2 (schiff-base intermediate with DNA) is an active-site residue. Catalysis depends on glutamate 3, which acts as the Proton donor. The active-site Proton donor; for beta-elimination activity is the lysine 58. Residues histidine 91, arginine 109, and arginine 154 each coordinate DNA. The FPG-type zinc finger occupies alanine 240 to lysine 274. Arginine 264 (proton donor; for delta-elimination activity) is an active-site residue.

Belongs to the FPG family. As to quaternary structure, monomer. Zn(2+) serves as cofactor.

It carries out the reaction Hydrolysis of DNA containing ring-opened 7-methylguanine residues, releasing 2,6-diamino-4-hydroxy-5-(N-methyl)formamidopyrimidine.. The catalysed reaction is 2'-deoxyribonucleotide-(2'-deoxyribose 5'-phosphate)-2'-deoxyribonucleotide-DNA = a 3'-end 2'-deoxyribonucleotide-(2,3-dehydro-2,3-deoxyribose 5'-phosphate)-DNA + a 5'-end 5'-phospho-2'-deoxyribonucleoside-DNA + H(+). Its function is as follows. Involved in base excision repair of DNA damaged by oxidation or by mutagenic agents. Acts as a DNA glycosylase that recognizes and removes damaged bases. Has a preference for oxidized purines, such as 7,8-dihydro-8-oxoguanine (8-oxoG). Has AP (apurinic/apyrimidinic) lyase activity and introduces nicks in the DNA strand. Cleaves the DNA backbone by beta-delta elimination to generate a single-strand break at the site of the removed base with both 3'- and 5'-phosphates. The sequence is that of Formamidopyrimidine-DNA glycosylase from Bordetella petrii (strain ATCC BAA-461 / DSM 12804 / CCUG 43448).